The chain runs to 298 residues: Protease HtpX homolog (298 aa).

Helical transmembrane passes span 14–34 (VVLL…AGYL) and 39–59 (YAMG…SMIF). His143 is a Zn(2+) binding site. Residue Glu144 is part of the active site. His147 contacts Zn(2+). The next 2 helical transmembrane spans lie at 158-178 (IAVA…RMLW) and 197-217 (IITL…ASLI). Glu226 lines the Zn(2+) pocket.

Belongs to the peptidase M48B family. It depends on Zn(2+) as a cofactor.

It is found in the cell membrane. This chain is Protease HtpX homolog, found in Streptococcus pyogenes serotype M49 (strain NZ131).